A 346-amino-acid chain; its full sequence is S-adenosylmethionine:tRNA ribosyltransferase-isomerase (346 aa).

It belongs to the QueA family. In terms of assembly, monomer.

Its subcellular location is the cytoplasm. It catalyses the reaction 7-aminomethyl-7-carbaguanosine(34) in tRNA + S-adenosyl-L-methionine = epoxyqueuosine(34) in tRNA + adenine + L-methionine + 2 H(+). The protein operates within tRNA modification; tRNA-queuosine biosynthesis. Transfers and isomerizes the ribose moiety from AdoMet to the 7-aminomethyl group of 7-deazaguanine (preQ1-tRNA) to give epoxyqueuosine (oQ-tRNA). The polypeptide is S-adenosylmethionine:tRNA ribosyltransferase-isomerase (Shewanella denitrificans (strain OS217 / ATCC BAA-1090 / DSM 15013)).